The sequence spans 1155 residues: DNA-directed RNA polymerase subunit beta (1155 aa).

The protein belongs to the RNA polymerase beta chain family. In terms of assembly, the RNAP catalytic core consists of 2 alpha, 1 beta, 1 beta' and 1 omega subunit. When a sigma factor is associated with the core the holoenzyme is formed, which can initiate transcription.

The enzyme catalyses RNA(n) + a ribonucleoside 5'-triphosphate = RNA(n+1) + diphosphate. Functionally, DNA-dependent RNA polymerase catalyzes the transcription of DNA into RNA using the four ribonucleoside triphosphates as substrates. The chain is DNA-directed RNA polymerase subunit beta from Borreliella afzelii (strain PKo) (Borrelia afzelii).